Here is a 354-residue protein sequence, read N- to C-terminus: MASTNISDREKALNAALAQIERSFGKGAIMRLGDATQMRVETISTGALTLDLALGGGLPKGRIVEIYGPESSGKTTLALHAVAATQQAGGVAAFVDAEHALDPVYSKALGVDIDNLLVAQPDNGESALEIVDQLVRSTAVDIIVVDSVAALVPRAEIEGEMGDTSVGSQARLMSKAMRKIAGNIGRSGCLVIFLNQLRQKIGVTYGSPEVTTGGNALKFYASVRLDIRRIQTLKKGTEGEYGIRAKVKVAKNKVAPPFRIAEFDIIFGQGISRMGCTIDLAEKCEVITRKGAWYSYNGENIAQGRDNAMKYLEENPEIAATIDQQVREKLSLVNAVFPVETEDGAEEQGEDGDF.

68 to 75 (GPESSGKT) contributes to the ATP binding site.

It belongs to the RecA family.

The protein resides in the cytoplasm. Its function is as follows. Can catalyze the hydrolysis of ATP in the presence of single-stranded DNA, the ATP-dependent uptake of single-stranded DNA by duplex DNA, and the ATP-dependent hybridization of homologous single-stranded DNAs. It interacts with LexA causing its activation and leading to its autocatalytic cleavage. In Synechocystis sp. (strain ATCC 27184 / PCC 6803 / Kazusa), this protein is Protein RecA.